The following is a 152-amino-acid chain: Mitochondrial fission 1 protein (152 aa).

Met1 carries the N-acetylmethionine modification. Over 1 to 122 the chain is Cytoplasmic; the sequence is MEAVLNELVS…LIDKAMKKDG (122 aa). A Phosphoserine modification is found at Ser10. A TPR repeat occupies 71–104; that stretch reads RDYVFYLAVGNYRLKEYEKALKYVRGLLQTEPQN. The chain crosses the membrane as a helical span at residues 123 to 143; it reads LVGMAIVGGMALGVAGLAGLI. Residues 144-152 are Mitochondrial intermembrane-facing; that stretch reads GLAVSKSKS.

The protein belongs to the FIS1 family. Interacts with DNM1L/DLP1 through the TPR region; may form part of a larger protein complex at the endoplasmic reticulum-mitochondrial interface during mitochondrial fission. Interacts with MARCHF5. Interacts with MIEF1. Interacts with PEX11A, PEX11B and PEX11G. In terms of processing, ubiquitinated by MARCHF5.

It is found in the mitochondrion outer membrane. Its subcellular location is the peroxisome membrane. In terms of biological role, involved in the fragmentation of the mitochondrial network and its perinuclear clustering. Plays a minor role in the recruitment and association of the fission mediator dynamin-related protein 1 (DNM1L) to the mitochondrial surface and mitochondrial fission. May not be essential for the assembly of functional fission complexes and the subsequent membrane scission event. Also mediates peroxisomal fission. May act when the products of fission are directed toward mitochondrial homeostasis, mitophagy, or apoptosis. Can induce cytochrome c release from the mitochondrion to the cytosol, ultimately leading to apoptosis. The chain is Mitochondrial fission 1 protein from Rattus norvegicus (Rat).